Consider the following 279-residue polypeptide: Ankyrin repeat domain-containing protein 7 (279 aa).

Residues M1–R11 are compositionally biased toward basic residues. The disordered stretch occupies residues M1–I25. ANK repeat units follow at residues R80 to V109, E113 to L142, Y146 to A175, D179 to A208, and N212 to H241.

In Mus musculus (Mouse), this protein is Ankyrin repeat domain-containing protein 7 (Ankrd7).